The following is a 209-amino-acid chain: Thymidine kinase (209 aa).

ATP is bound by residues 25–32 (GCMFAGKT) and 103–106 (DEVQ). The Proton acceptor role is filled by Glu-104. 4 residues coordinate Zn(2+): Cys-160, Cys-163, Cys-198, and Cys-201.

This sequence belongs to the thymidine kinase family. Homotetramer.

Its subcellular location is the cytoplasm. The enzyme catalyses thymidine + ATP = dTMP + ADP + H(+). The sequence is that of Thymidine kinase from Mycoplasma mycoides subsp. mycoides SC (strain CCUG 32753 / NCTC 10114 / PG1).